The chain runs to 268 residues: Probable chemotaxis protein methyltransferase (268 aa).

A CheR-type methyltransferase domain is found at 1 to 262; that stretch reads MIYSDAGIFL…GITTYRYTTK (262 aa). Residues Asn-60, Thr-62, Arg-66, Glu-104, Asp-130, 188-189, and 205-206 contribute to the S-adenosyl-L-methionine site; these read NL and RN.

It carries out the reaction L-glutamyl-[protein] + S-adenosyl-L-methionine = [protein]-L-glutamate 5-O-methyl ester + S-adenosyl-L-homocysteine. Functionally, methylation of the membrane-bound methyl-accepting chemotaxis proteins (MCP) to form gamma-glutamyl methyl ester residues in MCP. In Rhizobium etli (strain ATCC 51251 / DSM 11541 / JCM 21823 / NBRC 15573 / CFN 42), this protein is Probable chemotaxis protein methyltransferase (cheRch1).